A 233-amino-acid chain; its full sequence is Octanoyltransferase (233 aa).

The 182-residue stretch at 32-213 (NNIDGILLLL…NFKMIFETDL (182 aa)) folds into the BPL/LPL catalytic domain. Substrate contacts are provided by residues 77–84 (RGGNVTYH), 144–146 (AIG), and 157–159 (GFA). The active-site Acyl-thioester intermediate is the Cys-175.

Belongs to the LipB family.

The protein localises to the cytoplasm. The enzyme catalyses octanoyl-[ACP] + L-lysyl-[protein] = N(6)-octanoyl-L-lysyl-[protein] + holo-[ACP] + H(+). Its pathway is protein modification; protein lipoylation via endogenous pathway; protein N(6)-(lipoyl)lysine from octanoyl-[acyl-carrier-protein]: step 1/2. In terms of biological role, catalyzes the transfer of endogenously produced octanoic acid from octanoyl-acyl-carrier-protein onto the lipoyl domains of lipoate-dependent enzymes. Lipoyl-ACP can also act as a substrate although octanoyl-ACP is likely to be the physiological substrate. In Clostridium kluyveri (strain ATCC 8527 / DSM 555 / NBRC 12016 / NCIMB 10680 / K1), this protein is Octanoyltransferase.